A 292-amino-acid polypeptide reads, in one-letter code: AKT-interacting protein (292 aa).

The span at 1 to 11 shows a compositional bias: polar residues; it reads MNPFWSMSTSS. A disordered region spans residues 1–63; that stretch reads MNPFWSMSTS…TSPAPAAQST (63 aa). Residues 14–23 are compositionally biased toward basic and acidic residues; the sequence is KRSEGEEKTL. Serine 30 bears the Phosphoserine mark. The UBC core domain occupies 74–222; that stretch reads YLEYSLLAEF…VVDSVKVCTA (149 aa).

This sequence belongs to the ubiquitin-conjugating enzyme family. FTS subfamily. Component of the FTS/Hook/FHIP complex (FHF complex), composed of AKTIP/FTS, FHIP1B, and one or more members of the Hook family of proteins HOOK1, HOOK2, and HOOK3. Interacts directly with HOOK1, HOOK2 and HOOK3. The FHF complex associates with the homotypic vesicular sorting complex (the HOPS complex). Also interacts with AKT1. May interact with FHIP1A.

It localises to the cytoplasm. The protein localises to the cell membrane. Functionally, component of the FTS/Hook/FHIP complex (FHF complex). The FHF complex may function to promote vesicle trafficking and/or fusion via the homotypic vesicular protein sorting complex (the HOPS complex). Regulates apoptosis by enhancing phosphorylation and activation of AKT1. Increases release of TNFSF6 via the AKT1/GSK3B/NFATC1 signaling cascade. FHF complex promotes the distribution of AP-4 complex to the perinuclear area of the cell. The polypeptide is AKT-interacting protein (Homo sapiens (Human)).